The sequence spans 369 residues: 2-aminoethylphosphonate--pyruvate transaminase (369 aa).

N6-(pyridoxal phosphate)lysine is present on Lys193.

This sequence belongs to the class-V pyridoxal-phosphate-dependent aminotransferase family. PhnW subfamily. As to quaternary structure, homodimer. Pyridoxal 5'-phosphate serves as cofactor.

It carries out the reaction (2-aminoethyl)phosphonate + pyruvate = phosphonoacetaldehyde + L-alanine. Its function is as follows. Involved in phosphonate degradation. This Burkholderia thailandensis (strain ATCC 700388 / DSM 13276 / CCUG 48851 / CIP 106301 / E264) protein is 2-aminoethylphosphonate--pyruvate transaminase.